Reading from the N-terminus, the 253-residue chain is FGFR1 oncogene partner 2 (253 aa).

Residues 5–104 adopt a coiled-coil conformation; it reads IEKALADAKA…SALELIMSKY (100 aa). Residue Ser141 is modified to Phosphoserine. Residues 160-223 adopt a coiled-coil conformation; that stretch reads LERRHLEANQ…LREILQITRE (64 aa). Residues 231–253 are disordered; it reads DDASESTSLSALVTNSDLSLRKS. A compositionally biased stretch (polar residues) spans 235–253; sequence ESTSLSALVTNSDLSLRKS.

The protein belongs to the SIKE family. In terms of tissue distribution, expressed in bone marrow, spleen and thymus.

It is found in the cytoplasm. Functionally, may be involved in wound healing pathway. This is FGFR1 oncogene partner 2 (FGFR1OP2) from Homo sapiens (Human).